Consider the following 311-residue polypeptide: Ribosomal RNA small subunit methyltransferase H (311 aa).

S-adenosyl-L-methionine contacts are provided by residues 39 to 41, D59, F87, D102, and H109; that span reads GGH.

Belongs to the methyltransferase superfamily. RsmH family.

It localises to the cytoplasm. It carries out the reaction cytidine(1402) in 16S rRNA + S-adenosyl-L-methionine = N(4)-methylcytidine(1402) in 16S rRNA + S-adenosyl-L-homocysteine + H(+). Its function is as follows. Specifically methylates the N4 position of cytidine in position 1402 (C1402) of 16S rRNA. This is Ribosomal RNA small subunit methyltransferase H from Porphyromonas gingivalis (strain ATCC 33277 / DSM 20709 / CIP 103683 / JCM 12257 / NCTC 11834 / 2561).